A 58-amino-acid chain; its full sequence is Large ribosomal subunit protein bL32 (58 aa).

This sequence belongs to the bacterial ribosomal protein bL32 family.

The sequence is that of Large ribosomal subunit protein bL32 from Ligilactobacillus salivarius (strain UCC118) (Lactobacillus salivarius).